The sequence spans 501 residues: MSKQVRVRFAPSPTGALHIGGVRTALFNYLFAKKHNGVFYLRIEDTDQNRFVPGAEKYILEALKWLGISPDETIGKNEKFGPYRQSERKHLYKQYADLLINSGWAYYAFDTSESLDTLRKITEAAGNTFIYNHTVRETLDNSLTNSPEKVAERIANGEDYVIRFKTPVNETLHLKDIIRGDIKFETNLLDDKVLFKSDGMPTYHLANIVDDHLMETSHVIRGEEWLPSMPLHVLLYRAFGWEAPEFAHLPLILKPVGNGKLSKRDGEKLGFPVFPLQWKTNEGTSLGYKENGFFPETVINFLAMLGWNDGTQQEIFSLEELVQKFDLNRIHKAGAKFDPEKNKWFNHQYLVKKEDSTLAELFLPILASKGIVTNLDYTTKVVALVKERAHFVNELWDLSDYFFIAPTSYDEKATKNWKEETPELMKQLIVVLNGIEDFTSLNIETIVKDWMTQNEIGMGKVMQPFRLSLVGKMMGPHLFDIIEMIGKKETINRIEKAIATL.

Positions Pro11–Gly21 match the 'HIGH' region motif. The 'KMSKS' region motif lies at Lys260–Arg264. Lys263 is an ATP binding site.

The protein belongs to the class-I aminoacyl-tRNA synthetase family. Glutamate--tRNA ligase type 1 subfamily. Monomer.

It localises to the cytoplasm. The catalysed reaction is tRNA(Glu) + L-glutamate + ATP = L-glutamyl-tRNA(Glu) + AMP + diphosphate. Functionally, catalyzes the attachment of glutamate to tRNA(Glu) in a two-step reaction: glutamate is first activated by ATP to form Glu-AMP and then transferred to the acceptor end of tRNA(Glu). This is Glutamate--tRNA ligase from Flavobacterium psychrophilum (strain ATCC 49511 / DSM 21280 / CIP 103535 / JIP02/86).